The chain runs to 494 residues: Probable cytochrome P450 515A1 (494 aa).

A helical membrane pass occupies residues 1 to 21; it reads MILGIILGLFIYIYLINIKFF. Residue Cys440 participates in heme binding.

The protein belongs to the cytochrome P450 family. Heme is required as a cofactor.

It is found in the membrane. The protein is Probable cytochrome P450 515A1 (cyp515A1) of Dictyostelium discoideum (Social amoeba).